Consider the following 435-residue polypeptide: Zinc finger and BTB domain-containing protein 25 (435 aa).

The BTB domain occupies 1–107; it reads MDTASHSLVL…GIRFLHADYL (107 aa). Residues Lys142, Lys148, Lys198, and Lys204 each participate in a glycyl lysine isopeptide (Lys-Gly) (interchain with G-Cter in SUMO2) cross-link. Residues 238 to 260 form a C2H2-type 1 zinc finger; sequence HLCHYCGERFDSRSNLRQHLHTH. Residues Lys303 and Lys330 each participate in a glycyl lysine isopeptide (Lys-Gly) (interchain with G-Cter in SUMO2) cross-link. The C2H2-type 2 zinc-finger motif lies at 349–371; it reads MSCTICGHKFPRKSQLLEHMYTH. Lys405 is covalently cross-linked (Glycyl lysine isopeptide (Lys-Gly) (interchain with G-Cter in SUMO2)).

As to expression, expressed mainly in hematopoietic cells and testis.

Its subcellular location is the nucleus. May be involved in transcriptional regulation. The polypeptide is Zinc finger and BTB domain-containing protein 25 (ZBTB25) (Homo sapiens (Human)).